Reading from the N-terminus, the 85-residue chain is Antibacterial factor-related peptide 1 (85 aa).

The N-terminal stretch at 1–19 is a signal peptide; the sequence is MLYFCLLLVLLLPNNGVSS.

Expressed in the pharynx and body wall muscle.

It is found in the secreted. The protein is Antibacterial factor-related peptide 1 of Caenorhabditis elegans.